Consider the following 257-residue polypeptide: ATP synthase subunit a (257 aa).

Residues 1-4 (MFIT) constitute a propeptide, removed in mature form. 8 helical membrane passes run 27-47 (FSNF…LAII), 58-78 (IVPQ…LNLV), 93-113 (YFPF…LRLI), 122-142 (QLIF…ILGL), 149-169 (VFGL…LVLI), 189-209 (IIAG…FMGL), 214-234 (FIIG…EFGI), and 236-256 (FIQA…SLNL).

Belongs to the ATPase A chain family. F-type ATPases have 2 components, CF(1) - the catalytic core - and CF(0) - the membrane proton channel. CF(1) has five subunits: alpha(3), beta(3), gamma(1), delta(1), epsilon(1). CF(0) has three main subunits: a, b and c.

The protein resides in the mitochondrion inner membrane. In terms of biological role, mitochondrial membrane ATP synthase (F(1)F(0) ATP synthase or Complex V) produces ATP from ADP in the presence of a proton gradient across the membrane which is generated by electron transport complexes of the respiratory chain. F-type ATPases consist of two structural domains, F(1) - containing the extramembraneous catalytic core and F(0) - containing the membrane proton channel, linked together by a central stalk and a peripheral stalk. During catalysis, ATP synthesis in the catalytic domain of F(1) is coupled via a rotary mechanism of the central stalk subunits to proton translocation. Key component of the proton channel; it may play a direct role in the translocation of protons across the membrane. The polypeptide is ATP synthase subunit a (atp6) (Schizosaccharomyces pombe (strain 972 / ATCC 24843) (Fission yeast)).